The following is a 281-amino-acid chain: Pantothenate synthetase (281 aa).

30–37 (MGYLHEGH) is a binding site for ATP. Histidine 37 functions as the Proton donor in the catalytic mechanism. Residue glutamine 61 participates in (R)-pantoate binding. Beta-alanine is bound at residue glutamine 61. An ATP-binding site is contributed by 147-150 (GQKD). Residue glutamine 153 participates in (R)-pantoate binding. ATP is bound by residues valine 176 and 184–187 (MSSR).

It belongs to the pantothenate synthetase family. As to quaternary structure, homodimer.

It localises to the cytoplasm. The catalysed reaction is (R)-pantoate + beta-alanine + ATP = (R)-pantothenate + AMP + diphosphate + H(+). It participates in cofactor biosynthesis; (R)-pantothenate biosynthesis; (R)-pantothenate from (R)-pantoate and beta-alanine: step 1/1. Its function is as follows. Catalyzes the condensation of pantoate with beta-alanine in an ATP-dependent reaction via a pantoyl-adenylate intermediate. The polypeptide is Pantothenate synthetase (Heliobacterium modesticaldum (strain ATCC 51547 / Ice1)).